The chain runs to 166 residues: Transcriptional repressor NrdR (166 aa).

A zinc finger lies at 3 to 34; the sequence is CPFCHFVETDVIDTRKLYEGEVIRRRRRCRAC. An ATP-cone domain is found at 49 to 139; sequence LMVVKKDGTR…VYRAFTDIGK (91 aa).

This sequence belongs to the NrdR family. Zn(2+) serves as cofactor.

Negatively regulates transcription of bacterial ribonucleotide reductase nrd genes and operons by binding to NrdR-boxes. The polypeptide is Transcriptional repressor NrdR (Chloroflexus aurantiacus (strain ATCC 29364 / DSM 637 / Y-400-fl)).